The following is a 22-amino-acid chain: ITACLDPDGWKEPGPLPGISTK.

Residues 1–22 (ITACLDPDGWKEPGPLPGISTK) form a disordered region. The Proton donor/acceptor role is filled by E12.

Belongs to the glyoxalase I family. It depends on Zn(2+) as a cofactor.

It carries out the reaction (R)-S-lactoylglutathione = methylglyoxal + glutathione. Its pathway is secondary metabolite metabolism; methylglyoxal degradation; (R)-lactate from methylglyoxal: step 1/2. Catalyzes the conversion of hemimercaptal, formed from methylglyoxal and glutathione, to S-lactoylglutathione. The protein is Putative lactoylglutathione lyase of Pinus strobus (Eastern white pine).